The sequence spans 63 residues: Cecropin (63 aa).

The N-terminal stretch at 1–23 (MNFYKIFVFIALILALSVSQSEA) is a signal peptide. Arginine 62 bears the Arginine amide mark.

In terms of assembly, monomer. Hemolymph.

It localises to the secreted. Functionally, cecropins have lytic and antibacterial activity against several Gram-negative bacteria. This is Cecropin from Glossina morsitans morsitans (Savannah tsetse fly).